Here is a 414-residue protein sequence, read N- to C-terminus: Probable serine/threonine-protein kinase CHK1 homolog (414 aa).

The Protein kinase domain maps to 4-255; sequence YELQETLASG…VSTVMKDPWV (252 aa). ATP contacts are provided by residues 10–18 and lysine 32; that span reads LASGSTSKV. Aspartate 121 functions as the Proton acceptor in the catalytic mechanism. Positions 291 to 310 are disordered; it reads PGEVHKTPRTRPVSSQPRRA.

It belongs to the protein kinase superfamily. CAMK Ser/Thr protein kinase family. NIM1 subfamily.

The protein resides in the nucleus. It carries out the reaction L-seryl-[protein] + ATP = O-phospho-L-seryl-[protein] + ADP + H(+). The catalysed reaction is L-threonyl-[protein] + ATP = O-phospho-L-threonyl-[protein] + ADP + H(+). In terms of biological role, serine/threonine-protein kinase which is required for checkpoint-mediated cell cycle arrest and activation of DNA repair in response to the presence of DNA damage or unreplicated DNA. May also negatively regulate cell cycle progression during unperturbed cell cycles. This chain is Probable serine/threonine-protein kinase CHK1 homolog (CHK1), found in Encephalitozoon cuniculi (strain GB-M1) (Microsporidian parasite).